Here is a 405-residue protein sequence, read N- to C-terminus: Formin-like protein 15a (405 aa).

A disordered region spans residues 1–31; sequence MSLVEISGSDAMAAPMPGRVPPPPPRPPPMP. The segment covering 18–31 has biased composition (pro residues); the sequence is GRVPPPPPRPPPMP. Positions 52 to 405 constitute an FH2 domain; sequence FPRPAKKRAS…VCWFFVRLMI (354 aa).

It belongs to the formin-like family. Class-II subfamily.

This Arabidopsis thaliana (Mouse-ear cress) protein is Formin-like protein 15a (FH15A).